The sequence spans 274 residues: Leucine-rich repeat-containing protein 10 (274 aa).

8 LRR repeats span residues 30-51, 52-74, 76-97, 98-120, 121-143, 145-166, 167-189, and 191-213; these read LDRM…VCSF, TELV…LAQL, NLQI…VCTL, KQLC…LSLL, QNLR…VCEL, LLKT…LRRL, RELR…LLRM, and FLEV…HLTN. Residues 236–274 form a disordered region; it reads RVGRWAEETPEPDPRKARRYALAKEENQEPPPPLLPSSS. Residues 239–250 are compositionally biased toward basic and acidic residues; that stretch reads RWAEETPEPDPR. The segment covering 264–274 has biased composition (pro residues); that stretch reads EPPPPLLPSSS.

In terms of tissue distribution, detected specifically in the heart.

The protein localises to the nucleus. Its function is as follows. May play important roles in cardiac development and/or cardiac function. The chain is Leucine-rich repeat-containing protein 10 (Lrrc10) from Mus musculus (Mouse).